Consider the following 647-residue polypeptide: TNFAIP3-interacting protein 1 (647 aa).

The stretch at 39 to 72 (MQGIKMLGELLEESQMEASRLRQKAEELVKDSEL) forms a coiled coil. Over residues 61–71 (QKAEELVKDSE) the composition is skewed to basic and acidic residues. The tract at residues 61–168 (QKAEELVKDS…DLGPPPPEDS (108 aa)) is disordered. Ser-77 is subject to Phosphoserine. An interaction with Nef region spans residues 95 to 425 (TKVQVHPATS…SPLTRQREYQ (331 aa)). Over residues 102–115 (ATSTAATTTATATT) the composition is skewed to low complexity. A compositionally biased stretch (polar residues) spans 143-155 (EEQNSPETGSHPT). The stretch at 209-270 (SKVHKNEQRT…KKLLMNSSCK (62 aa)) forms a coiled coil. Phosphoserine is present on residues Ser-297, Ser-416, and Ser-455. A coiled-coil region spans residues 311–551 (AAEKKVKLLE…KASGERYHME (241 aa)). The segment at 444 to 601 (ASPSSPPAAF…MEHPPPHPNS (158 aa)) is required for inhibitory activity of TNF-induced NF-kappa-B activation. The segment at 465–523 (KQELVTQNELLKQQVKIFEEDFQRERSDRERMNEEKEELKKQVEKLQAQVTLTNAQLKT) is ubiquitin-binding domain (UBD). The short motif at 537 to 543 (QKRKAKA) is the Nuclear localization signal element. Phosphotyrosine is present on Tyr-565. Asymmetric dimethylarginine is present on Arg-584. Residue Arg-612 is modified to Asymmetric dimethylarginine; alternate. Arg-612 bears the Omega-N-methylarginine; alternate mark. Residues 613-647 (PPCAGIRNQSSQVMDPPPDRPAEPESADNDCDGPQ) form a disordered region. Positions 637 to 647 (ESADNDCDGPQ) are enriched in acidic residues. Residue Ser-638 is modified to Phosphoserine.

In terms of assembly, interacts with TNFAIP3 and IKBKG (polyubiquitinated); facilitates TNFAIP3-mediated de-ubiquitination of NEMO/IKBKG. Interacts with polyubiquitin. Interacts with MAPK1, SELPLG and PIK3CD. Interacts with IRAK1 (polyubiquitinated). Interacts with MYD88; the interaction is indicative for participation in an activated TLR-signaling complex. Interacts with TAX1BP1. Phosphorylation at Tyr-565 by SRC-family kinases recruits phosphoinositide-3-kinase (PI3K) PIK3CD:p85 heterodimer which results in integrin activation and leukocyte adhesion to activated endothelium during inflammation. In terms of tissue distribution, ubiquitous. Abundant in heart and skeletal muscle and expressed at lower levels in thymus, liver, kidney, brain and intestinal tract.

The protein localises to the cytoplasm. The protein resides in the nucleus. Inhibits NF-kappa-B activation and TNF-induced NF-kappa-B-dependent gene expression by regulating TAX1BP1 and A20/TNFAIP3-mediated deubiquitination of IKBKG; proposed to link A20/TNFAIP3 to ubiquitinated IKBKG. Involved in regulation of EGF-induced ERK1/ERK2 signaling pathway; blocks MAPK3/MAPK1 nuclear translocation and MAPK1-dependent transcription. Increases cell surface CD4(T4) antigen expression. Involved in the anti-inflammatory response of macrophages and positively regulates TLR-induced activation of CEBPB. Involved in the prevention of autoimmunity; this function implicates binding to polyubiquitin. Involved in leukocyte integrin activation during inflammation; this function is mediated by association with SELPLG and dependent on phosphorylation by SRC-family kinases. The polypeptide is TNFAIP3-interacting protein 1 (Tnip1) (Mus musculus (Mouse)).